The sequence spans 380 residues: Cytochrome b (380 aa).

A run of 4 helical transmembrane segments spans residues 34–54 (FGSL…LLAM), 78–99 (WLIR…YLHI), 114–134 (WNTG…GYVL), and 179–199 (FFAL…IHLT). Positions 84 and 98 each coordinate heme b. 2 residues coordinate heme b: histidine 183 and histidine 197. Histidine 202 contributes to the a ubiquinone binding site. A run of 4 helical transmembrane segments spans residues 227–247 (LKDA…ALFS), 289–309 (LGGV…PLLH), 321–341 (LSQL…WIGS), and 348–368 (FIII…ILFP).

The protein belongs to the cytochrome b family. As to quaternary structure, the cytochrome bc1 complex contains 11 subunits: 3 respiratory subunits (MT-CYB, CYC1 and UQCRFS1), 2 core proteins (UQCRC1 and UQCRC2) and 6 low-molecular weight proteins (UQCRH/QCR6, UQCRB/QCR7, UQCRQ/QCR8, UQCR10/QCR9, UQCR11/QCR10 and a cleavage product of UQCRFS1). This cytochrome bc1 complex then forms a dimer. Heme b serves as cofactor.

The protein localises to the mitochondrion inner membrane. Component of the ubiquinol-cytochrome c reductase complex (complex III or cytochrome b-c1 complex) that is part of the mitochondrial respiratory chain. The b-c1 complex mediates electron transfer from ubiquinol to cytochrome c. Contributes to the generation of a proton gradient across the mitochondrial membrane that is then used for ATP synthesis. The sequence is that of Cytochrome b (MT-CYB) from Oceanodroma tethys (Wedge-rumped storm-petrel).